Consider the following 427-residue polypeptide: 11-beta-hydroxysteroid dehydrogenase type 2 (427 aa).

82–111 provides a ligand contact to NAD(+); it reads TRAVLITGCDSGFGNATAKKLDAMGFTVLA. Residue S219 participates in substrate binding. Y232 (proton acceptor) is an active-site residue.

Belongs to the short-chain dehydrogenases/reductases (SDR) family. In terms of assembly, interacts with ligand-free cytoplasmic NR3C2. Highly expressed in the kidney and adrenal and at lower levels in the colon.

Its subcellular location is the microsome. It is found in the endoplasmic reticulum. It catalyses the reaction an 11beta-hydroxysteroid + NAD(+) = an 11-oxosteroid + NADH + H(+). The enzyme catalyses corticosterone + NAD(+) = 11-dehydrocorticosterone + NADH + H(+). The catalysed reaction is cortisol + NAD(+) = cortisone + NADH + H(+). It carries out the reaction 11beta,17beta-dihydroxyandrost-4-ene-3-one + NAD(+) = 17beta-hydroxyandrost-4-ene-3,11-dione + NADH + H(+). It catalyses the reaction 11beta-hydroxyandrost-4-ene-3,17-dione + NAD(+) = androst-4-ene-3,11,17-trione + NADH + H(+). It participates in steroid metabolism. Inhibited by glycyrrhetinic acid, carbenoloxone, 11-alpha-OH-progesterone and 11-beta-OH-progesterone. In terms of biological role, catalyzes the conversion of biologically active 11beta-hydroxyglucocorticoids (11beta-hydroxysteroid) such as cortisol, to inactive 11-ketoglucocorticoids (11-oxosteroid) such as cortisone, in the presence of NAD(+). Functions as a dehydrogenase (oxidase), thereby decreasing the concentration of active glucocorticoids, thus protecting the nonselective mineralocorticoid receptor from occupation by glucocorticoids. Plays an important role in maintaining glucocorticoids balance during preimplantation and protects the fetus from excessive maternal corticosterone exposure. Catalyzes the oxidation of 11beta-hydroxytestosterone (11beta,17beta-dihydroxyandrost-4-ene-3-one) to 11-ketotestosterone (17beta-hydroxyandrost-4-ene-3,11-dione), a major bioactive androgen. Catalyzes the conversion of 11beta-hydroxyandrostenedione (11beta-hydroxyandrost-4-ene-3,17-dione) to 11-ketoandrostenedione (androst-4-ene-3,11,17-trione), which can be further metabolized to 11-ketotestosterone. Converts 7-beta-25-dihydroxycholesterol to 7-oxo-25-hydroxycholesterol in vitro. 7-beta-25-dihydroxycholesterol (not 7-oxo-25-hydroxycholesterol) acts as a ligand for the G-protein-coupled receptor (GPCR) Epstein-Barr virus-induced gene 2 (EBI2) and may thereby regulate immune cell migration. May protect ovulating oocytes and fertilizing spermatozoa from the adverse effects of cortisol. This is 11-beta-hydroxysteroid dehydrogenase type 2 (HSD11B2) from Ovis aries (Sheep).